A 582-amino-acid chain; its full sequence is Phosphoribosylaminoimidazole carboxylase (582 aa).

One can recognise an ATP-grasp domain in the interval 114-305 (KKYLAEKGVA…QFENHLRAIL (192 aa)). 143–200 (AGRLGLPLMLKAKTLAYDGRGNSPLKSTSSEDIQASLKFLGDRPLYAEGWAPFVKEVA) lines the ATP pocket.

The protein in the C-terminal section; belongs to the AIR carboxylase family. Class I subfamily.

It catalyses the reaction 5-amino-1-(5-phospho-D-ribosyl)imidazole-4-carboxylate + H(+) = 5-amino-1-(5-phospho-beta-D-ribosyl)imidazole + CO2. The protein operates within purine metabolism; IMP biosynthesis via de novo pathway; 5-amino-1-(5-phospho-D-ribosyl)imidazole-4-carboxylate from 5-amino-1-(5-phospho-D-ribosyl)imidazole (carboxylase route): step 1/1. This Cryptococcus neoformans var. grubii serotype A (strain H99 / ATCC 208821 / CBS 10515 / FGSC 9487) (Filobasidiella neoformans var. grubii) protein is Phosphoribosylaminoimidazole carboxylase (ADE2).